We begin with the raw amino-acid sequence, 315 residues long: Glutamyl-Q tRNA(Asp) synthetase (315 aa).

L-glutamate contacts are provided by residues 12 to 16 (RFAPS) and Glu-48. A 'HIGH' region motif is present at residues 15–25 (PSPSGPLHFGS). 4 residues coordinate Zn(2+): Cys-104, Cys-106, Tyr-124, and Cys-128. The L-glutamate site is built by Tyr-181 and Arg-199. Residues 237-241 (KLSKQ) carry the 'KMSKS' region motif. Residue Lys-240 participates in ATP binding.

The protein belongs to the class-I aminoacyl-tRNA synthetase family. GluQ subfamily. Requires Zn(2+) as cofactor.

In terms of biological role, catalyzes the tRNA-independent activation of glutamate in presence of ATP and the subsequent transfer of glutamate onto a tRNA(Asp). Glutamate is transferred on the 2-amino-5-(4,5-dihydroxy-2-cyclopenten-1-yl) moiety of the queuosine in the wobble position of the QUC anticodon. The sequence is that of Glutamyl-Q tRNA(Asp) synthetase from Aromatoleum aromaticum (strain DSM 19018 / LMG 30748 / EbN1) (Azoarcus sp. (strain EbN1)).